Here is a 477-residue protein sequence, read N- to C-terminus: Aspartyl/glutamyl-tRNA(Asn/Gln) amidotransferase subunit B (477 aa).

The protein belongs to the GatB/GatE family. GatB subfamily. As to quaternary structure, heterotrimer of A, B and C subunits.

The enzyme catalyses L-glutamyl-tRNA(Gln) + L-glutamine + ATP + H2O = L-glutaminyl-tRNA(Gln) + L-glutamate + ADP + phosphate + H(+). It catalyses the reaction L-aspartyl-tRNA(Asn) + L-glutamine + ATP + H2O = L-asparaginyl-tRNA(Asn) + L-glutamate + ADP + phosphate + 2 H(+). Its function is as follows. Allows the formation of correctly charged Asn-tRNA(Asn) or Gln-tRNA(Gln) through the transamidation of misacylated Asp-tRNA(Asn) or Glu-tRNA(Gln) in organisms which lack either or both of asparaginyl-tRNA or glutaminyl-tRNA synthetases. The reaction takes place in the presence of glutamine and ATP through an activated phospho-Asp-tRNA(Asn) or phospho-Glu-tRNA(Gln). The protein is Aspartyl/glutamyl-tRNA(Asn/Gln) amidotransferase subunit B of Legionella pneumophila (strain Lens).